Consider the following 508-residue polypeptide: Aspartyl/glutamyl-tRNA(Asn/Gln) amidotransferase subunit B (508 aa).

This sequence belongs to the GatB/GatE family. GatB subfamily. As to quaternary structure, heterotrimer of A, B and C subunits.

The enzyme catalyses L-glutamyl-tRNA(Gln) + L-glutamine + ATP + H2O = L-glutaminyl-tRNA(Gln) + L-glutamate + ADP + phosphate + H(+). It carries out the reaction L-aspartyl-tRNA(Asn) + L-glutamine + ATP + H2O = L-asparaginyl-tRNA(Asn) + L-glutamate + ADP + phosphate + 2 H(+). Functionally, allows the formation of correctly charged Asn-tRNA(Asn) or Gln-tRNA(Gln) through the transamidation of misacylated Asp-tRNA(Asn) or Glu-tRNA(Gln) in organisms which lack either or both of asparaginyl-tRNA or glutaminyl-tRNA synthetases. The reaction takes place in the presence of glutamine and ATP through an activated phospho-Asp-tRNA(Asn) or phospho-Glu-tRNA(Gln). This chain is Aspartyl/glutamyl-tRNA(Asn/Gln) amidotransferase subunit B, found in Salinibacter ruber (strain DSM 13855 / M31).